The following is a 286-amino-acid chain: ATP synthase gamma chain (286 aa).

It belongs to the ATPase gamma chain family. In terms of assembly, F-type ATPases have 2 components, CF(1) - the catalytic core - and CF(0) - the membrane proton channel. CF(1) has five subunits: alpha(3), beta(3), gamma(1), delta(1), epsilon(1). CF(0) has three main subunits: a, b and c.

The protein localises to the cell inner membrane. Produces ATP from ADP in the presence of a proton gradient across the membrane. The gamma chain is believed to be important in regulating ATPase activity and the flow of protons through the CF(0) complex. This chain is ATP synthase gamma chain, found in Pseudomonas savastanoi pv. phaseolicola (strain 1448A / Race 6) (Pseudomonas syringae pv. phaseolicola (strain 1448A / Race 6)).